The primary structure comprises 627 residues: Translation factor GUF1, mitochondrial (627 aa).

A mitochondrion-targeting transit peptide spans M1–Y16. The tr-type G domain maps to E40–V221. GTP-binding positions include A49–S56, D114–H118, and N168–D171.

It belongs to the TRAFAC class translation factor GTPase superfamily. Classic translation factor GTPase family. LepA subfamily.

The protein resides in the mitochondrion inner membrane. It catalyses the reaction GTP + H2O = GDP + phosphate + H(+). Promotes mitochondrial protein synthesis. May act as a fidelity factor of the translation reaction, by catalyzing a one-codon backward translocation of tRNAs on improperly translocated ribosomes. Binds to mitochondrial ribosomes in a GTP-dependent manner. This chain is Translation factor GUF1, mitochondrial, found in Fusarium vanettenii (strain ATCC MYA-4622 / CBS 123669 / FGSC 9596 / NRRL 45880 / 77-13-4) (Fusarium solani subsp. pisi).